The following is a 658-amino-acid chain: UvrABC system protein B (658 aa).

The Helicase ATP-binding domain maps to Lys-25–Met-178. Gly-38–Thr-45 contacts ATP. Positions His-91 to Ile-114 match the Beta-hairpin motif. Residues Gln-433–Arg-607 form the Helicase C-terminal domain. The UVR domain occupies Glu-623–Leu-658.

The protein belongs to the UvrB family. As to quaternary structure, forms a heterotetramer with UvrA during the search for lesions. Interacts with UvrC in an incision complex.

The protein localises to the cytoplasm. Functionally, the UvrABC repair system catalyzes the recognition and processing of DNA lesions. A damage recognition complex composed of 2 UvrA and 2 UvrB subunits scans DNA for abnormalities. Upon binding of the UvrA(2)B(2) complex to a putative damaged site, the DNA wraps around one UvrB monomer. DNA wrap is dependent on ATP binding by UvrB and probably causes local melting of the DNA helix, facilitating insertion of UvrB beta-hairpin between the DNA strands. Then UvrB probes one DNA strand for the presence of a lesion. If a lesion is found the UvrA subunits dissociate and the UvrB-DNA preincision complex is formed. This complex is subsequently bound by UvrC and the second UvrB is released. If no lesion is found, the DNA wraps around the other UvrB subunit that will check the other stand for damage. The polypeptide is UvrABC system protein B (Helicobacter pylori (strain HPAG1)).